A 1499-amino-acid polypeptide reads, in one-letter code: Autophagy-related protein 2 (1499 aa).

Positions 211-221 (EQSVPSYGSSS) are enriched in polar residues. Residues 211–237 (EQSVPSYGSSSSDKEDDNTSDSEDPLS) are disordered. Residues 224–234 (KEDDNTSDSED) show a composition bias toward acidic residues.

The protein belongs to the ATG2 family.

The protein localises to the preautophagosomal structure membrane. Its subcellular location is the endoplasmic reticulum membrane. It catalyses the reaction a 1,2-diacyl-sn-glycero-3-phosphocholine(in) = a 1,2-diacyl-sn-glycero-3-phosphocholine(out). The enzyme catalyses a 1,2-diacyl-sn-glycero-3-phospho-L-serine(in) = a 1,2-diacyl-sn-glycero-3-phospho-L-serine(out). It carries out the reaction a 1,2-diacyl-sn-glycero-3-phosphoethanolamine(in) = a 1,2-diacyl-sn-glycero-3-phosphoethanolamine(out). Its function is as follows. Lipid transfer protein required for autophagosome completion and peroxisome degradation. Tethers the edge of the isolation membrane (IM) to the endoplasmic reticulum (ER) and mediates direct lipid transfer from ER to IM for IM expansion. ATG2 binds to the ER exit site (ERES), which is the membrane source for autophagosome formation, using basic residues in its N-terminal region (NR) and to the expanding edge of the IM through its C-terminal region. The latter binding is assisted by an ATG18-PtdIns3P interaction. ATG2 then extracts phospholipids from the membrane source using its NR and transfers them to ATG9 to the IM through its predicted beta-sheet-rich structure for membrane expansion. The sequence is that of Autophagy-related protein 2 from Kluyveromyces marxianus (strain DMKU3-1042 / BCC 29191 / NBRC 104275) (Yeast).